We begin with the raw amino-acid sequence, 151 residues long: uncharacterized protein (151 aa).

Helical transmembrane passes span 14-34, 45-65, and 91-111; these read GAALLDYIIVSVPLLLIYWLI, ISLVVLLYSILLPMFWRGYLI, and VIVAGLVYCITFGLGLIASLI.

The protein resides in the cell membrane. This is an uncharacterized protein from Bacillus subtilis (strain 168).